We begin with the raw amino-acid sequence, 1649 residues long: DNA-directed RNA polymerase subunit beta' (1649 aa).

4 residues coordinate Zn(2+): Cys-62, Cys-64, Cys-77, and Cys-80. 3 residues coordinate Mg(2+): Asp-746, Asp-748, and Asp-750. 4 residues coordinate Zn(2+): Cys-1077, Cys-1268, Cys-1275, and Cys-1278.

Belongs to the RNA polymerase beta' chain family. In terms of assembly, the RNAP catalytic core consists of 2 alpha, 1 beta, 1 beta' and 1 omega subunit. When a sigma factor is associated with the core the holoenzyme is formed, which can initiate transcription. The cofactor is Mg(2+). Requires Zn(2+) as cofactor.

The catalysed reaction is RNA(n) + a ribonucleoside 5'-triphosphate = RNA(n+1) + diphosphate. DNA-dependent RNA polymerase catalyzes the transcription of DNA into RNA using the four ribonucleoside triphosphates as substrates. In Thermosipho africanus (strain TCF52B), this protein is DNA-directed RNA polymerase subunit beta'.